The primary structure comprises 96 residues: MEQAPEDQGPQREPYNEWTLDLLEELKNEAVRHFPRPWLHSLGQHIYNTYGDTWEGVEAIIRILQQLLFIHFRIGCRHSRIGITRQRRVRNGTSRS.

The interval 1–42 (MEQAPEDQGPQREPYNEWTLDLLEELKNEAVRHFPRPWLHSL) is homooligomerization. Phosphoserine; by host is present on residues S79, S94, and S96.

It belongs to the HIV-1 VPR protein family. As to quaternary structure, homooligomer, may form homodimer. Interacts with p6-gag region of the Pr55 Gag precursor protein through a (Leu-X-X)4 motif near the C-terminus of the P6gag protein. Interacts with host UNG. May interact with host RAD23A/HHR23A. Interacts with host VPRBP/DCAF1, leading to hijack the CUL4A-RBX1-DDB1-DCAF1/VPRBP complex, mediating ubiquitination of host proteins such as TERT and ZGPAT and arrest of the cell cycle in G2 phase. Post-translationally, phosphorylated on several residues by host. These phosphorylations regulate VPR activity for the nuclear import of the HIV-1 pre-integration complex.

It localises to the virion. Its subcellular location is the host nucleus. It is found in the host extracellular space. Its function is as follows. During virus replication, may deplete host UNG protein, and incude G2-M cell cycle arrest. Acts by targeting specific host proteins for degradation by the 26S proteasome, through association with the cellular CUL4A-DDB1 E3 ligase complex by direct interaction with host VPRPB/DCAF-1. Cell cycle arrest reportedly occurs within hours of infection and is not blocked by antiviral agents, suggesting that it is initiated by the VPR carried into the virion. Additionally, VPR induces apoptosis in a cell cycle dependent manner suggesting that these two effects are mechanistically linked. Detected in the serum and cerebrospinal fluid of AIDS patient, VPR may also induce cell death to bystander cells. In terms of biological role, during virus entry, plays a role in the transport of the viral pre-integration (PIC) complex to the host nucleus. This function is crucial for viral infection of non-dividing macrophages. May act directly at the nuclear pore complex, by binding nucleoporins phenylalanine-glycine (FG)-repeat regions. The sequence is that of Protein Vpr from Human immunodeficiency virus type 1 group M subtype F1 (isolate 93BR020) (HIV-1).